The chain runs to 532 residues: Muscarinic acetylcholine receptor M5 (532 aa).

The Extracellular segment spans residues 1 to 29; sequence MEGESYHNETTVNGTPVNHQALERHGLWE. Residue asparagine 8 is glycosylated (N-linked (GlcNAc...) asparagine). The chain crosses the membrane as a helical span at residues 30 to 53; that stretch reads VITIAAVTAVVSLMTIVGNVLVMI. Topologically, residues 54 to 66 are cytoplasmic; that stretch reads SFKVNSQLKTVNN. Residues 67-87 form a helical membrane-spanning segment; the sequence is YYLLSLACADLIIGIFSMNLY. The Extracellular segment spans residues 88 to 104; sequence TTYILMGRWVLGSLACD. The cysteines at positions 103 and 183 are disulfide-linked. The chain crosses the membrane as a helical span at residues 105-126; it reads LWLALDYVASNASVMNLLVISF. At 127–146 the chain is on the cytoplasmic side; that stretch reads DRYFSITRPLTYRAKRTPKR. Residues 147–169 traverse the membrane as a helical segment; it reads AGIMIGLAWLVSFILWAPAILCW. Residues 170 to 191 lie on the Extracellular side of the membrane; it reads QYLVGKRTVPPDECQIQFLSEP. The helical transmembrane segment at 192 to 214 threads the bilayer; sequence TITFGTAIAAFYIPVSVMTILYC. Residues 215–443 are Cytoplasmic-facing; it reads RIYRETEKRT…LVKERKAAQT (229 aa). Residues 265-290 are disordered; the sequence is VRNQASWSSSRRSTSTTGKPTQATDL. Residues 270–281 are compositionally biased toward low complexity; it reads SWSSSRRSTSTT. The helical transmembrane segment at 444–464 threads the bilayer; it reads LSAILLAFIITWTPYNIMVLV. Over 465–478 the chain is Extracellular; sequence STFCDKCVPVTLWH. A helical transmembrane segment spans residues 479 to 498; it reads LGYWLCYVNSTINPICYALC. Topologically, residues 499-532 are cytoplasmic; it reads NRTFRKTFKLLLLCRWKKKKVEEKLYWQGNSKLP. Phosphothreonine occurs at positions 501 and 505.

It belongs to the G-protein coupled receptor 1 family. Muscarinic acetylcholine receptor subfamily. CHRM5 sub-subfamily.

It localises to the cell membrane. The protein resides in the postsynaptic cell membrane. Functionally, the muscarinic acetylcholine receptor mediates various cellular responses, including inhibition of adenylate cyclase, breakdown of phosphoinositides and modulation of potassium channels through the action of G proteins. Primary transducing effect is Pi turnover. This chain is Muscarinic acetylcholine receptor M5 (Chrm5), found in Mus musculus (Mouse).